Reading from the N-terminus, the 156-residue chain is Cyanate hydratase (156 aa).

Residues Arg-96, Glu-99, and Ser-122 contribute to the active site.

The protein belongs to the cyanase family.

The enzyme catalyses cyanate + hydrogencarbonate + 3 H(+) = NH4(+) + 2 CO2. Its function is as follows. Catalyzes the reaction of cyanate with bicarbonate to produce ammonia and carbon dioxide. The polypeptide is Cyanate hydratase (Pseudomonas paraeruginosa (strain DSM 24068 / PA7) (Pseudomonas aeruginosa (strain PA7))).